The sequence spans 489 residues: ATP-dependent zinc metalloprotease FtsH 3 (489 aa).

Residues 1-14 lie on the Cytoplasmic side of the membrane; the sequence is MNPRPVRPGGSLQQ. Residues 15 to 31 traverse the membrane as a helical segment; the sequence is SLLALGSLSVAVGLAVW. Residues 32–489 lie on the Extracellular side of the membrane; it reads QQRTLGRGRS…GPRPARPAMN (458 aa). Residue 95 to 102 participates in ATP binding; the sequence is GPPGTGKT. H315 provides a ligand contact to Zn(2+). Residue E316 is part of the active site. Residues H319 and D391 each contribute to the Zn(2+) site.

This sequence in the central section; belongs to the AAA ATPase family. The protein in the C-terminal section; belongs to the peptidase M41 family. Homohexamer. Requires Zn(2+) as cofactor.

The protein resides in the cell membrane. Functionally, acts as a processive, ATP-dependent zinc metallopeptidase for both cytoplasmic and membrane proteins. Plays a role in the quality control of integral membrane proteins. This chain is ATP-dependent zinc metalloprotease FtsH 3, found in Sphaerobacter thermophilus (strain ATCC 49802 / DSM 20745 / KCCM 41009 / NCIMB 13125 / S 6022).